A 550-amino-acid polypeptide reads, in one-letter code: MAGPPALPPPETAAAATTAAAAASSSAASPHYQEWILDTIDSLRSRKARPDLERICRMVRRRHGPEPERTRAELEKLIQQRAVLRVSYKGSISYRNAARVQPPRRGATPPAPPRAPRGGPAAAAAPPPTPAPPPPPAPVAAAAAPARAPRAAAAAAAATAPPSPGPAQPGPRAQRAAPLAAPPPAPAAPPAAAPPAGPRRAPPPAAAVAARESPLPPPPQPPAPPQQQQQPPPPPPPQQPQPPPEGGAARAGGPARPVSLREVVRYLGGSSGAGGRLTRGRVQGLLEEEAAARGRLERTRLGALALPRGDRPGRAPPAASARAARNKRAGEERVLEKEEEEEEEEDDEDDDDDVVSEGSEVPESDRPAGAQHHQLNGGERGPQTAKERAKEWSLCGPHPGQEEGRGPAAGSGTRQVFSMAALSKEGGSASSTTGPDSPSPVPLPPGKPALPGADGTPFGCPAGRKEKPADPVEWTVMDVVEYFTEAGFPEQATAFQEQEIDGKSLLLMQRTDVLTGLSIRLGPALKIYEHHIKVLQQGHFEDDDPEGFLG.

Residues 1–11 (MAGPPALPPPE) are compositionally biased toward pro residues. 2 disordered regions span residues 1-32 (MAGP…SPHY) and 93-468 (SYRN…KEKP). Over residues 12–30 (TAAAATTAAAAASSSAASP) the composition is skewed to low complexity. The SAMD1-like winged helix (WH) domain maps to 24-100 (SSSAASPHYQ…SISYRNAARV (77 aa)). Thr108 is subject to Phosphothreonine. The span at 125–138 (APPPTPAPPPPPAP) shows a compositional bias: pro residues. The span at 139-160 (VAAAAAPARAPRAAAAAAAATA) shows a compositional bias: low complexity. Residue Ser163 is modified to Phosphoserine. Over residues 170-179 (GPRAQRAAPL) the composition is skewed to low complexity. Pro residues-rich tracts occupy residues 180–205 (AAPP…PPPA) and 214–245 (PLPP…PPPE). Low complexity predominate over residues 246–257 (GGAARAGGPARP). At Ser270 the chain carries Phosphoserine. A compositionally biased stretch (basic and acidic residues) spans 290-300 (AAARGRLERTR). Positions 337 to 355 (KEEEEEEEEDDEDDDDDVV) are enriched in acidic residues. Residues 437-448 (SPSPVPLPPGKP) show a composition bias toward pro residues. Residues 474-542 (WTVMDVVEYF…KVLQQGHFED (69 aa)) enclose the SAM domain.

In terms of assembly, homopolymerize into a closed pentameric ring. Interacts (via SAM domain) with L3MBTL3 (via SAM domain); the interaction mediates L3MBTL3 binding to chromatin. Interacts (via WH domain) with KDM1A; the interaction modulates KDM1A function.

Its subcellular location is the nucleus. The protein resides in the chromosome. It localises to the secreted. Functionally, unmethylated CpG islands (CGIs)-binding protein which localizes to H3K4me3-decorated CGIs, where it acts as a transcriptional repressor. Tethers L3MBTL3 to chromatin and interacts with the KDM1A histone demethylase complex to modulate H3K4me2 and H3K4me3 levels at CGIs. Plays a role in atherogenesis by binding with LDL on cell surface and promoting LDL oxidation which leads to the formation of foam cell. The chain is Atherin (SAMD1) from Oryctolagus cuniculus (Rabbit).